Reading from the N-terminus, the 317-residue chain is Pantothenate kinase (317 aa).

95–102 (GSVAVGKS) is an ATP binding site.

This sequence belongs to the prokaryotic pantothenate kinase family.

The protein localises to the cytoplasm. The enzyme catalyses (R)-pantothenate + ATP = (R)-4'-phosphopantothenate + ADP + H(+). Its pathway is cofactor biosynthesis; coenzyme A biosynthesis; CoA from (R)-pantothenate: step 1/5. This chain is Pantothenate kinase, found in Rhodopseudomonas palustris (strain BisB18).